The chain runs to 340 residues: Glyceraldehyde-3-phosphate dehydrogenase (340 aa).

Residues serine 11–isoleucine 12 and glycine 111 each bind NAD(+). A D-glyceraldehyde 3-phosphate-binding site is contributed by serine 140 to asparagine 142. Catalysis depends on cysteine 141, which acts as the Nucleophile. Arginine 169 is an NAD(+) binding site. Histidine 195–glycine 196 is a D-glyceraldehyde 3-phosphate binding site. NAD(+) is bound at residue glutamine 303.

The protein belongs to the glyceraldehyde-3-phosphate dehydrogenase family. As to quaternary structure, homotetramer.

The protein resides in the cytoplasm. The catalysed reaction is D-glyceraldehyde 3-phosphate + phosphate + NADP(+) = (2R)-3-phospho-glyceroyl phosphate + NADPH + H(+). It catalyses the reaction D-glyceraldehyde 3-phosphate + phosphate + NAD(+) = (2R)-3-phospho-glyceroyl phosphate + NADH + H(+). The protein operates within carbohydrate degradation; glycolysis; pyruvate from D-glyceraldehyde 3-phosphate: step 1/5. In Methanococcus maripaludis (strain C5 / ATCC BAA-1333), this protein is Glyceraldehyde-3-phosphate dehydrogenase.